The sequence spans 329 residues: MYSTECTILLIEIIFYFLAAIILYDMLHKMANSPLLCIAVLTVTLAVTSKCYAQNYGINVPITGSMDVAVPNKTDDQIGLSSTLCIYYPKEAATQMNDAEWKSTVTQLLLAKGWPTTSVYLNEYADLQSFSNDPQLNCDYNIILAKYDQNETLDMSELAELLLYEWLCNPMDVTLYYYQQTSESNKWIAMGSDCTIKVCPLNTQTLGIGCKTTDVSTFEELTTTEKLAIIDVVDGVNHKANYTISTCTIKNCIRLDPRENVAIIQVGGPEIIDISEDPMVVPHVQRATRINWKKWWQIFYTVVDYINTIIQAMSKRSRSLNTSAYYFRV.

Positions 1–53 (MYSTECTILLIEIIFYFLAAIILYDMLHKMANSPLLCIAVLTVTLAVTSKCYA) are cleaved as a signal peptide. Asn72 carries an N-linked (GlcNAc...) asparagine; by host glycan. Cys85 and Cys138 are oxidised to a cystine. Asp98 is a binding site for Ca(2+). Asn150 is a glycosylation site (N-linked (GlcNAc...) asparagine; by host). Residues 168 to 170 (CNP) form a CNP motif; interaction with ITGAV/ITGB3 region. Disulfide bonds link Cys168–Cys252, Cys194–Cys247, and Cys199–Cys210. Ca(2+) is bound by residues Gln180, Gly209, Thr217, Glu219, Asp231, Val232, and Asp234. N-linked (GlcNAc...) asparagine; by host glycosylation is present at Asn241. Ca(2+) is bound at residue Asp304. The N-linked (GlcNAc...) asparagine; by host glycan is linked to Asn321.

This sequence belongs to the rotavirus VP7 family. In terms of assembly, homotrimer; disulfide-linked. 2 Ca(2+) ions bound at each subunit interface in the trimer hold the trimer together. Interacts with the intermediate capsid protein VP6. Interacts with the outer capsid protein VP5*. N-glycosylated. Post-translationally, the N-terminus is blocked possibly by pyroglutamic acid.

The protein resides in the virion. It localises to the host endoplasmic reticulum lumen. Calcium-binding protein that interacts with rotavirus cell receptors once the initial attachment by VP4 has been achieved. Rotavirus attachment and entry into the host cell probably involves multiple sequential contacts between the outer capsid proteins VP4 and VP7, and the cell receptors. Following entry into the host cell, low intracellular or intravesicular Ca(2+) concentration probably causes the calcium-stabilized VP7 trimers to dissociate from the virion. This step is probably necessary for the membrane-disrupting entry step and the release of VP4, which is locked onto the virion by VP7. The chain is Outer capsid glycoprotein VP7 from Aves (RV-A).